The sequence spans 344 residues: Anthranilate phosphoribosyltransferase (344 aa).

5-phospho-alpha-D-ribose 1-diphosphate-binding positions include Gly-80, 83–84 (GD), Thr-88, 90–93 (NIST), 108–116 (KHGNRSVSS), and Ser-120. Gly-80 provides a ligand contact to anthranilate. Ser-92 contacts Mg(2+). Anthranilate is bound at residue Asn-111. An anthranilate-binding site is contributed by Arg-166. Asp-225 and Glu-226 together coordinate Mg(2+).

It belongs to the anthranilate phosphoribosyltransferase family. In terms of assembly, homodimer. Mg(2+) is required as a cofactor.

The catalysed reaction is N-(5-phospho-beta-D-ribosyl)anthranilate + diphosphate = 5-phospho-alpha-D-ribose 1-diphosphate + anthranilate. Its pathway is amino-acid biosynthesis; L-tryptophan biosynthesis; L-tryptophan from chorismate: step 2/5. Functionally, catalyzes the transfer of the phosphoribosyl group of 5-phosphorylribose-1-pyrophosphate (PRPP) to anthranilate to yield N-(5'-phosphoribosyl)-anthranilate (PRA). This chain is Anthranilate phosphoribosyltransferase, found in Petrotoga mobilis (strain DSM 10674 / SJ95).